A 396-amino-acid polypeptide reads, in one-letter code: Probable glucan endo-1,6-beta-glucosidase B (396 aa).

Residues 1-17 (MIRRLAAFSALSGLATA) form the signal peptide. N-linked (GlcNAc...) asparagine glycosylation is present at N30. E219 functions as the Proton donor in the catalytic mechanism. The N-linked (GlcNAc...) asparagine glycan is linked to N272. E320 (nucleophile) is an active-site residue.

Belongs to the glycosyl hydrolase 5 (cellulase A) family.

The protein resides in the secreted. It carries out the reaction Random hydrolysis of (1-&gt;6)-linkages in (1-&gt;6)-beta-D-glucans.. In terms of biological role, beta-glucanases participate in the metabolism of beta-glucan, the main structural component of the cell wall. Acts on lutean, pustulan and 1,6-oligo-beta-D-glucosides. This chain is Probable glucan endo-1,6-beta-glucosidase B (exgB), found in Aspergillus fumigatus (strain CBS 144.89 / FGSC A1163 / CEA10) (Neosartorya fumigata).